A 351-amino-acid polypeptide reads, in one-letter code: DNA polymerase IV (351 aa).

In terms of domain architecture, UmuC spans 4–185 (IIHIDMDCFF…LPLAKIPGVG (182 aa)). Mg(2+)-binding residues include Asp8 and Asp103. The active site involves Glu104.

Belongs to the DNA polymerase type-Y family. As to quaternary structure, monomer. Mg(2+) serves as cofactor.

It localises to the cytoplasm. It catalyses the reaction DNA(n) + a 2'-deoxyribonucleoside 5'-triphosphate = DNA(n+1) + diphosphate. Its function is as follows. Poorly processive, error-prone DNA polymerase involved in untargeted mutagenesis. Copies undamaged DNA at stalled replication forks, which arise in vivo from mismatched or misaligned primer ends. These misaligned primers can be extended by PolIV. Exhibits no 3'-5' exonuclease (proofreading) activity. May be involved in translesional synthesis, in conjunction with the beta clamp from PolIII. The chain is DNA polymerase IV from Salmonella paratyphi A (strain ATCC 9150 / SARB42).